The primary structure comprises 511 residues: GMP synthase [glutamine-hydrolyzing] (511 aa).

Positions 5–195 (DIIVLDFGSQ…AKYICDCEST (191 aa)) constitute a Glutamine amidotransferase type-1 domain. Catalysis depends on C82, which acts as the Nucleophile. Catalysis depends on residues H169 and E171. In terms of domain architecture, GMPS ATP-PPase spans 196-386 (WNMGNFAKIK…LGLSPDLVYR (191 aa)). An ATP-binding site is contributed by 223 to 229 (SGGVDSS).

In terms of assembly, homodimer.

It catalyses the reaction XMP + L-glutamine + ATP + H2O = GMP + L-glutamate + AMP + diphosphate + 2 H(+). It functions in the pathway purine metabolism; GMP biosynthesis; GMP from XMP (L-Gln route): step 1/1. Functionally, catalyzes the synthesis of GMP from XMP. This is GMP synthase [glutamine-hydrolyzing] from Campylobacter hominis (strain ATCC BAA-381 / DSM 21671 / CCUG 45161 / LMG 19568 / NCTC 13146 / CH001A).